Consider the following 130-residue polypeptide: Anti-adapter protein IraD (130 aa).

The protein belongs to the GpW/Gp25 family. IraD subfamily. Interacts with RssB.

It localises to the cytoplasm. Functionally, inhibits RpoS proteolysis by regulating RssB activity, thereby increasing the stability of the sigma stress factor RpoS during oxidative stress. Its effect on RpoS stability is due to its interaction with RssB, which probably blocks the interaction of RssB with RpoS, and the consequent delivery of the RssB-RpoS complex to the ClpXP protein degradation pathway. In Escherichia coli O157:H7, this protein is Anti-adapter protein IraD.